A 618-amino-acid chain; its full sequence is Zinc finger protein 48 (618 aa).

The residue at position 1 (M1) is an N-acetylmethionine. Basic and acidic residues-rich tracts occupy residues 1–22 (MERAVEPWGPDLHRPEEREPQR) and 39–51 (EFEHTPQEDDLGF). Disordered stretches follow at residues 1–51 (MERA…DLGF) and 78–109 (LWVQREGLGKPQPRDRGPRLLGEPRWGQASSD). Residue K87 forms a Glycyl lysine isopeptide (Lys-Gly) (interchain with G-Cter in SUMO2) linkage. 2 C2H2-type zinc fingers span residues 112 to 134 (AVCGECGKSFRQMSDLVKHQRTH) and 140 to 162 (YKCGVCGKGFGDSSARIKHQRTH). Residues 157–189 (KHQRTHSGEKPYRARPPAQGPPKIPRSRIPAGE) are disordered. A Glycyl lysine isopeptide (Lys-Gly) (interchain with G-Cter in SUMO2) cross-link involves residue K179. 2 consecutive C2H2-type zinc fingers follow at residues 192-214 (TICGECGKSFRQSSDLVKHQRTH) and 220-242 (YKCGICGKGFGDSSARIKHQRTH). Positions 235–271 (RIKHQRTHRGEQPPRPVVPRRQPSRAATAATQGPKAQ) are disordered. Residue K269 forms a Glycyl lysine isopeptide (Lys-Gly) (interchain with G-Cter in SUMO2) linkage. 2 C2H2-type zinc fingers span residues 275–297 (YICTDCGKRFVLSCSLLSHQRSH) and 303–325 (FGCDVCGKEFARGSDLVKHLRVH). K329 participates in a covalent cross-link: Glycyl lysine isopeptide (Lys-Gly) (interchain with G-Cter in SUMO2). 2 consecutive C2H2-type zinc fingers follow at residues 331 to 353 (YLCPECGKGFADSSARVKHLRTH) and 359 to 381 (HACPECDRTFSLSSTLLRHRLTH). The segment covering 392 to 414 (YPLPALIPSPPPPPLGTSPPLTP) has biased composition (pro residues). The segment at 392 to 457 (YPLPALIPSP…DKPHKCPECG (66 aa)) is disordered. A compositionally biased stretch (low complexity) spans 415–432 (RSPSHSGEPFGLPGLEPE). The segment at 451–473 (HKCPECGKGFRRSSDLVKHHRVH) adopts a C2H2-type 9 zinc-finger fold. K477 is covalently cross-linked (Glycyl lysine isopeptide (Lys-Gly) (interchain with G-Cter in SUMO2)). The C2H2-type 10 zinc-finger motif lies at 479–501 (YLCPECGKGFADSSARVKHLRTH). The interval 500–540 (THRGERARPPPPSTLLRPHNPPGPVPMAPRPRVRAQPSGPS) is disordered. The span at 508 to 528 (PPPPSTLLRPHNPPGPVPMAP) shows a compositional bias: pro residues. 2 consecutive C2H2-type zinc fingers follow at residues 543 to 565 (HVCGFCGKEFPRSSDLVKHRRTH) and 571 to 593 (YKCAECGKGFGDSSARIKHQRGH). K610 is covalently cross-linked (Glycyl lysine isopeptide (Lys-Gly) (interchain with G-Cter in SUMO2)).

The protein belongs to the krueppel C2H2-type zinc-finger protein family.

The protein resides in the nucleus. Its function is as follows. May be involved in transcriptional regulation. The sequence is that of Zinc finger protein 48 (ZNF48) from Homo sapiens (Human).